The chain runs to 488 residues: Rhamnulokinase (488 aa).

11-15 (ASSGR) provides a ligand contact to ATP. Substrate contacts are provided by residues Ala-79 and 234 to 236 (HDT). Asp-235 acts as the Proton acceptor in catalysis. Thr-257 contacts ATP. Asn-294 contributes to the substrate binding site. The ATP site is built by Gln-302 and Gly-401.

It belongs to the rhamnulokinase family. Mg(2+) is required as a cofactor.

The catalysed reaction is L-rhamnulose + ATP = L-rhamnulose 1-phosphate + ADP + H(+). It functions in the pathway carbohydrate degradation; L-rhamnose degradation; glycerone phosphate from L-rhamnose: step 2/3. Functionally, involved in the catabolism of L-rhamnose (6-deoxy-L-mannose). Catalyzes the transfer of the gamma-phosphate group from ATP to the 1-hydroxyl group of L-rhamnulose to yield L-rhamnulose 1-phosphate. The sequence is that of Rhamnulokinase from Lactiplantibacillus plantarum (strain ATCC BAA-793 / NCIMB 8826 / WCFS1) (Lactobacillus plantarum).